A 367-amino-acid chain; its full sequence is NAD(P)H-quinone oxidoreductase subunit 1, chloroplastic (367 aa).

8 helical membrane-spanning segments follow: residues 29 to 49 (WIPLPILLLIILAVVGVLVVV), 96 to 116 (VLLFTLGPAIVVIPIFLSYLI), 128 to 148 (INLGIFFWITVSSVAPLGLLM), 176 to 196 (LALCVLSICLLSDSLSTIDIV), 204 to 224 (ILGWNIWRQPIGFIAFIIAAL), 266 to 286 (LVSALFASVLYLGGWSLPIPI), 304 to 324 (VISAFLGIGMTLLKTYLFLFL), and 347 to 367 (FLLPISLGNLLLTASLKIALL).

The protein belongs to the complex I subunit 1 family. In terms of assembly, NDH is composed of at least 16 different subunits, 5 of which are encoded in the nucleus.

The protein localises to the plastid. It localises to the chloroplast thylakoid membrane. The enzyme catalyses a plastoquinone + NADH + (n+1) H(+)(in) = a plastoquinol + NAD(+) + n H(+)(out). It carries out the reaction a plastoquinone + NADPH + (n+1) H(+)(in) = a plastoquinol + NADP(+) + n H(+)(out). NDH shuttles electrons from NAD(P)H:plastoquinone, via FMN and iron-sulfur (Fe-S) centers, to quinones in the photosynthetic chain and possibly in a chloroplast respiratory chain. The immediate electron acceptor for the enzyme in this species is believed to be plastoquinone. Couples the redox reaction to proton translocation, and thus conserves the redox energy in a proton gradient. The polypeptide is NAD(P)H-quinone oxidoreductase subunit 1, chloroplastic (Mesostigma viride (Green alga)).